Consider the following 717-residue polypeptide: HHIP-like protein 2 (717 aa).

The first 40 residues, 1–40 (MLGKHTSPHTVPGHRAPWLSPGIFCLGLPFLLGWVGLLQG), serve as a signal peptide directing secretion. Cystine bridges form between C203/C545, C207/C551, C423/C441, and C508/C607. Positions 642-717 (ARKASNATFT…MRQAAGRSHP (76 aa)) are disordered. Polar residues predominate over residues 646 to 662 (SNATFTSSSDRVASQKG). An N-linked (GlcNAc...) asparagine glycan is attached at N647. The segment covering 672–687 (SSKKTFRRPGTKKKSR) has biased composition (basic residues).

The protein belongs to the HHIP family.

It is found in the secreted. This Mus musculus (Mouse) protein is HHIP-like protein 2 (Hhipl2).